Here is a 96-residue protein sequence, read N- to C-terminus: Bacterial microcompartment shell protein EutM (96 aa).

The BMC domain occupies 3–87 (ALGMIETRGL…PHGDLEEVFP (85 aa)).

This sequence belongs to the bacterial microcompartments protein family. Homohexamer with a central pore of up to 8.6 Angstroms diameter. The hexamers pack into a two-dimensional array. Interacts with EutQ; a probably cytoplasm-facing helix (Val-49 to Gln-64) interacts with N-terminus of EutQ.

Its subcellular location is the bacterial microcompartment. It functions in the pathway amine and polyamine degradation; ethanolamine degradation. Its function is as follows. Probably a major component of the bacterial microcompartment (BMC) shell dedicated to ethanolamine degradation. Each homohexamer has a central pore with an opening of up to 8.6 Angstroms. A positively-charged funnel leads to the pore from each side of the hexamer. The pore probably allows metabolite passage into and out of the BMC. Expression of eutK, eutL, eutM, eutN, eutS (eutSMNLK) in E.coli leads to formation of a single BMC. Expression alone leads to thick filaments that interfere with cell separation. Coexpression of eutQ with eutSMNLK permits E.coli to make cells with more than one mobile BMC, as is usual in vivo. May play a role in BMC shell biogenesis. Can replace homolog pduA in the pdu operon, cells grow better than wild-type on 1,2-propanediol and vitamin B12. Protein is incorporated into the pdu BMC microcompartment. In terms of biological role, the ethanolamine (EA) catabolic bacterial microcompartment (BMC) probably concentrates low levels of ethanolamine catabolic enzymes, concentrates volatile reaction intermediates, keeps the level of toxic acetaldehyde low, generates enough acetyl-CoA to support cell growth, and maintains a pool of free coenzyme A (CoA) and NAD. Deletion of BMC genes (eutK, eutL, eutM) restores growth of eutD deletions, suggesting there are dedicated pools of coenzyme A (CoA) and NAD in the BMC. Expression of the eut operon allows this bacteria to use ethanolamine as a carbon, nitrogen and energy source. It relies on cobalamin (vitamin B12) both as a cofactor for the ethanolamine ammonia-lyase (EAL) activity and to induce the operon. EA enhances bacterial survival in macrophages in a concentration-dependent manner, suggesting it is an important nutrient during infection. This chain is Bacterial microcompartment shell protein EutM, found in Salmonella typhimurium (strain LT2 / SGSC1412 / ATCC 700720).